The primary structure comprises 76 residues: Acyl carrier protein (76 aa).

The 76-residue stretch at Met-1–Gln-76 folds into the Carrier domain. Position 36 is an O-(pantetheine 4'-phosphoryl)serine (Ser-36).

The protein belongs to the acyl carrier protein (ACP) family. 4'-phosphopantetheine is transferred from CoA to a specific serine of apo-ACP by AcpS. This modification is essential for activity because fatty acids are bound in thioester linkage to the sulfhydryl of the prosthetic group.

The protein resides in the cytoplasm. The protein operates within lipid metabolism; fatty acid biosynthesis. Its function is as follows. Carrier of the growing fatty acid chain in fatty acid biosynthesis. In Deinococcus geothermalis (strain DSM 11300 / CIP 105573 / AG-3a), this protein is Acyl carrier protein.